The following is a 174-amino-acid chain: Auxin-responsive protein IAA2 (174 aa).

Positions 16–20 (LCLGL) match the EAR-like (transcriptional repression) motif. The tract at residues 44–67 (FEETRDEEESTPPTKTQIVGWPPV) is disordered. A PB1 domain is found at 77–164 (VSYVKVSMDG…SCKRLRIMKG (88 aa)).

This sequence belongs to the Aux/IAA family. As to quaternary structure, homodimers and heterodimers. Interacts with the auxin-responsive protein IAA1. Interacts with TPL. In terms of tissue distribution, preferentially expressed in vegetative organs.

The protein localises to the nucleus. In terms of biological role, aux/IAA proteins are short-lived transcriptional factors that function as repressors of early auxin response genes at low auxin concentrations. Repression is thought to result from the interaction with auxin response factors (ARFs), proteins that bind to the auxin-responsive promoter element (AuxRE). Formation of heterodimers with ARF proteins may alter their ability to modulate early auxin response genes expression. The polypeptide is Auxin-responsive protein IAA2 (IAA2) (Arabidopsis thaliana (Mouse-ear cress)).